We begin with the raw amino-acid sequence, 508 residues long: Histidine--tRNA ligase, cytoplasmic (508 aa).

A WHEP-TRS domain is found at 3–59 (SPALEELVLNSRHRLVRGLKQQKASADQIEEEVAKLLKLKAQLGHDESKQKFVLKTP). Ser66 is modified (phosphoserine). L-histidine contacts are provided by residues 130–132 (DLT), Arg157, Asp177, Arg326, and 330–331 (YY).

This sequence belongs to the class-II aminoacyl-tRNA synthetase family. As to quaternary structure, homodimer.

Its subcellular location is the cytoplasm. It carries out the reaction tRNA(His) + L-histidine + ATP = L-histidyl-tRNA(His) + AMP + diphosphate + H(+). Its function is as follows. Catalyzes the ATP-dependent ligation of histidine to the 3'-end of its cognate tRNA, via the formation of an aminoacyl-adenylate intermediate (His-AMP). Plays a role in axon guidance. This chain is Histidine--tRNA ligase, cytoplasmic (HARS1), found in Mesocricetus auratus (Golden hamster).